We begin with the raw amino-acid sequence, 80 residues long: Small ribosomal subunit protein uS17 (80 aa).

Belongs to the universal ribosomal protein uS17 family. As to quaternary structure, part of the 30S ribosomal subunit.

In terms of biological role, one of the primary rRNA binding proteins, it binds specifically to the 5'-end of 16S ribosomal RNA. The sequence is that of Small ribosomal subunit protein uS17 from Chelativorans sp. (strain BNC1).